We begin with the raw amino-acid sequence, 179 residues long: MEKIIIDTEQFQRTISRISHQIIEKHAILDNIILVGIKRRGAEIAEMLQKRISELAQISLPLMALDITFYRDDLNLTSKDPVYTGVEHQLNIEGKTVILIDDVLFTGRTIRAALDALLDFGRAKRIELVILVDRGHRELPIRADYVGKNIPTALNEQVQVRTEHYDGVSQVALIHSTNG.

Substrate contacts are provided by residues Arg-39 to Arg-40, Asp-101 to Thr-109, Arg-134, and Val-158. Positions Val-97 to Thr-109 match the PRPP-binding motif.

The protein belongs to the purine/pyrimidine phosphoribosyltransferase family. PyrR subfamily.

The catalysed reaction is UMP + diphosphate = 5-phospho-alpha-D-ribose 1-diphosphate + uracil. Functionally, regulates the transcription of the pyrimidine nucleotide (pyr) operon in response to exogenous pyrimidines. Its function is as follows. Also displays a weak uracil phosphoribosyltransferase activity which is not physiologically significant. The polypeptide is Bifunctional protein PyrR (Haemophilus ducreyi (strain 35000HP / ATCC 700724)).